The chain runs to 493 residues: GPI alpha-1,6-mannosyltransferase 2 (493 aa).

Topologically, residues M1–R13 are cytoplasmic. A helical transmembrane segment spans residues F14–P34. Residues D35–H77 lie on the Lumenal side of the membrane. The helical transmembrane segment at G78–G98 threads the bilayer. Over T99–S113 the chain is Cytoplasmic. A helical transmembrane segment spans residues C114–L134. Topologically, residues H135–D136 are lumenal. Residues L137–I157 form a helical membrane-spanning segment. Residues S158–N161 lie on the Cytoplasmic side of the membrane. A helical transmembrane segment spans residues V162–G182. The Lumenal segment spans residues Q183 to S192. Residues G193–L213 form a helical membrane-spanning segment. Topologically, residues L214–L234 are cytoplasmic. The helical transmembrane segment at V235 to F255 threads the bilayer. Residues Q256–N327 lie on the Lumenal side of the membrane. A helical membrane pass occupies residues F328–T348. The Cytoplasmic portion of the chain corresponds to H349–K378. Residues V379–V399 traverse the membrane as a helical segment. Residues Q400–R469 are Lumenal-facing. The helical transmembrane segment at C470–L490 threads the bilayer. The Cytoplasmic portion of the chain corresponds to P491–T493.

The protein belongs to the PIGV family. Not N-glycosylated.

The protein localises to the endoplasmic reticulum membrane. Its pathway is glycolipid biosynthesis; glycosylphosphatidylinositol-anchor biosynthesis. Functionally, alpha-1,6-mannosyltransferase that catalyzes the transfer of the second mannose, via an alpha-1,6 bond, from a dolichol-phosphate-mannose (Dol-P-Man) to the alpha-D-Man-(1-&gt;4)-alpha-D-GlcN-(1-&gt;6)-(1-radyl,2-acyl-sn-glycero-3-phospho)-2-acyl-inositol (also termed H2) intermediate to generate an alpha-D-Man-(1-&gt;6)-alpha-D-Man-(1-&gt;4)-alpha-D-GlcN-(1-&gt;6)-(1-radyl,2-acyl-sn-glycero-3-phospho)-2-acyl-inositol (also termed H3) and participates in the seventh step of the glycosylphosphatidylinositol-anchor biosynthesis. Also transfers the second mannose on a 2-PEtn-alpha-D-Man-(1-&gt;4)-alpha-D-GlcN-(1-&gt;6)-(1-radyl,2-acyl-sn-glycero-3-phospho)-2-acyl-inositol (also termed H5). In Mus musculus (Mouse), this protein is GPI alpha-1,6-mannosyltransferase 2.